Reading from the N-terminus, the 159-residue chain is Putative 4-hydroxy-4-methyl-2-oxoglutarate aldolase (159 aa).

Residues 74 to 77 (GDNL) and R96 each bind substrate. D97 contacts a divalent metal cation.

Belongs to the class II aldolase/RraA-like family. Homotrimer. Requires a divalent metal cation as cofactor.

The catalysed reaction is 4-hydroxy-4-methyl-2-oxoglutarate = 2 pyruvate. It catalyses the reaction oxaloacetate + H(+) = pyruvate + CO2. Functionally, catalyzes the aldol cleavage of 4-hydroxy-4-methyl-2-oxoglutarate (HMG) into 2 molecules of pyruvate. Also contains a secondary oxaloacetate (OAA) decarboxylase activity due to the common pyruvate enolate transition state formed following C-C bond cleavage in the retro-aldol and decarboxylation reactions. The polypeptide is Putative 4-hydroxy-4-methyl-2-oxoglutarate aldolase (Bacillus cereus (strain ZK / E33L)).